Here is a 201-residue protein sequence, read N- to C-terminus: 3-isopropylmalate dehydratase small subunit (201 aa).

It belongs to the LeuD family. LeuD type 1 subfamily. In terms of assembly, heterodimer of LeuC and LeuD.

It carries out the reaction (2R,3S)-3-isopropylmalate = (2S)-2-isopropylmalate. It participates in amino-acid biosynthesis; L-leucine biosynthesis; L-leucine from 3-methyl-2-oxobutanoate: step 2/4. Functionally, catalyzes the isomerization between 2-isopropylmalate and 3-isopropylmalate, via the formation of 2-isopropylmaleate. In Xanthobacter autotrophicus (strain ATCC BAA-1158 / Py2), this protein is 3-isopropylmalate dehydratase small subunit.